We begin with the raw amino-acid sequence, 235 residues long: MAQADPADRDRLIVALDVPSVDAANAMIEKLGDSVGFYKIGYQLAYAGGLPLVEKLARAGKKVFVDLKLHDIGNTVARGVESLNSLGATFLTVHAYPQTMKAAVAARGDSGLKILAVTVLTSYDDSDLADAGYRFGVRDLVEARARQALAIGVDGLVCSPEEAANLRGIVGPDMALVTPGIRPAGAAAGDQKRIMTPARAIAAGASHLVVGRPVMEAADPKQAAEAIVAEIAQAT.

Substrate-binding positions include Asp-17, Lys-39, Asp-66–Thr-75, Thr-121, Arg-182, Gln-191, Gly-211, and Arg-212. The Proton donor role is filled by Lys-68.

The protein belongs to the OMP decarboxylase family. Type 1 subfamily. As to quaternary structure, homodimer.

It catalyses the reaction orotidine 5'-phosphate + H(+) = UMP + CO2. The protein operates within pyrimidine metabolism; UMP biosynthesis via de novo pathway; UMP from orotate: step 2/2. Functionally, catalyzes the decarboxylation of orotidine 5'-monophosphate (OMP) to uridine 5'-monophosphate (UMP). This Rhodopseudomonas palustris (strain BisB5) protein is Orotidine 5'-phosphate decarboxylase.